Here is a 155-residue protein sequence, read N- to C-terminus: Transcriptional repressor NrdR (155 aa).

A zinc finger lies at 3–34; the sequence is CPFCHAEETKVVDSRLVADGAQVRRRRECLEC. One can recognise an ATP-cone domain in the interval 49-139; the sequence is PLIIKRDGRR…VYKRFKDVSD (91 aa).

It belongs to the NrdR family. It depends on Zn(2+) as a cofactor.

In terms of biological role, negatively regulates transcription of bacterial ribonucleotide reductase nrd genes and operons by binding to NrdR-boxes. This is Transcriptional repressor NrdR from Legionella pneumophila (strain Paris).